The sequence spans 532 residues: Membrane protein insertase YidC (532 aa).

The next 5 membrane-spanning stretches (helical) occupy residues 7-27 (FFIFAFLFVSFLLWQAWQSQM), 336-356 (LTILYSIIGNWGFSIILITFI), 413-433 (GGFLPIFIQMPIFLSLYYMLI), 450-470 (LSSQDPYYVLPVIMGLTMFFI), and 492-512 (PVIFTAFFLWFPSGLVLYYII).

Belongs to the OXA1/ALB3/YidC family. Type 1 subfamily. Interacts with the Sec translocase complex via SecD. Specifically interacts with transmembrane segments of nascent integral membrane proteins during membrane integration.

It is found in the cell membrane. Required for the insertion and/or proper folding and/or complex formation of integral membrane proteins into the membrane. Involved in integration of membrane proteins that insert both dependently and independently of the Sec translocase complex, as well as at least some lipoproteins. Aids folding of multispanning membrane proteins. The sequence is that of Membrane protein insertase YidC from Buchnera aphidicola subsp. Acyrthosiphon pisum (strain APS) (Acyrthosiphon pisum symbiotic bacterium).